The primary structure comprises 72 residues: Translation initiation factor IF-1 (72 aa).

Residues 1–72 form the S1-like domain; it reads MAKDDVIEVE…TRGRITYRYK (72 aa). Tyr-60 is subject to Phosphotyrosine.

Belongs to the IF-1 family. In terms of assembly, component of the 30S ribosomal translation pre-initiation complex which assembles on the 30S ribosome in the order IF-2 and IF-3, IF-1 and N-formylmethionyl-tRNA(fMet); mRNA recruitment can occur at any time during PIC assembly.

The protein resides in the cytoplasm. Functionally, one of the essential components for the initiation of protein synthesis. Stabilizes the binding of IF-2 and IF-3 on the 30S subunit to which N-formylmethionyl-tRNA(fMet) subsequently binds. Helps modulate mRNA selection, yielding the 30S pre-initiation complex (PIC). Upon addition of the 50S ribosomal subunit IF-1, IF-2 and IF-3 are released leaving the mature 70S translation initiation complex. The chain is Translation initiation factor IF-1 from Geobacillus kaustophilus (strain HTA426).